Reading from the N-terminus, the 451-residue chain is PTS system cellobiose-specific EIIC component (451 aa).

The PTS EIIC type-3 domain maps to 8–423 (LEDRVMPVAG…FIAFAIYYPF (416 aa)). 10 helical membrane-spanning segments follow: residues 31–51 (GIIL…VGFL), 72–92 (LLYP…FGVA), 104–124 (LSAG…QVPF), 138–158 (GIPV…LAIV), 187–207 (FVAL…RLIL), 227–247 (LSVL…VQLL), 250–270 (TGLH…LSLM), 293–313 (FFDL…ALTM), 347–367 (IVMN…LVVV), and 407–427 (ILQI…FSIW).

The protein resides in the cell membrane. Functionally, the phosphoenolpyruvate-dependent sugar phosphotransferase system (sugar PTS), a major carbohydrate active transport system, catalyzes the phosphorylation of incoming sugar substrates concomitantly with their translocation across the cell membrane. The enzyme II CelABD PTS system is involved in cellobiose transport. The sequence is that of PTS system cellobiose-specific EIIC component from Geobacillus stearothermophilus (Bacillus stearothermophilus).